Reading from the N-terminus, the 138-residue chain is Large ribosomal subunit protein bL17 (138 aa).

This sequence belongs to the bacterial ribosomal protein bL17 family. Part of the 50S ribosomal subunit. Contacts protein L32.

This chain is Large ribosomal subunit protein bL17, found in Nitrobacter winogradskyi (strain ATCC 25391 / DSM 10237 / CIP 104748 / NCIMB 11846 / Nb-255).